The sequence spans 312 residues: Aspartoacylase (312 aa).

2 residues coordinate Zn(2+): His20 and Glu23. Arg62, Asn69, and Arg70 together coordinate N-acetyl-L-aspartate. His115 lines the Zn(2+) pocket. 2 residues coordinate N-acetyl-L-aspartate: Tyr163 and Arg167. The Proton donor/acceptor role is filled by Glu177. Position 287 (Tyr287) interacts with N-acetyl-L-aspartate.

The protein belongs to the AspA/AstE family. Aspartoacylase subfamily. In terms of assembly, homodimer. Requires Zn(2+) as cofactor.

Its subcellular location is the cytoplasm. The protein localises to the nucleus. The enzyme catalyses an N-acyl-L-aspartate + H2O = a carboxylate + L-aspartate. It carries out the reaction N-acetyl-L-aspartate + H2O = L-aspartate + acetate. Functionally, catalyzes the deacetylation of N-acetylaspartic acid (NAA) to produce acetate and L-aspartate. NAA occurs in high concentration in brain and its hydrolysis NAA plays a significant part in the maintenance of intact white matter. In other tissues it acts as a scavenger of NAA from body fluids. The chain is Aspartoacylase from Mus musculus (Mouse).